The sequence spans 591 residues: Homeobox domain-containing transcription factor HOB1 (591 aa).

Residues 1–15 show a composition bias toward basic and acidic residues; it reads MEGKNEDMHTPRGPE. Disordered regions lie at residues 1 to 37 and 148 to 168; these read MEGKNEDMHTPRGPEDASNIADEYPSPERQQQGDMLG and IAGPSTLRRSPLPDTFSRSPA. The homeobox DNA-binding region spans 176–223; sequence IAILRESYARNPNPDRKELERLAARTGRPWNKIREYFRQRRNKLRGLE. Disordered regions lie at residues 420–463 and 543–563; these read DAGL…PRES and DAIERRNAGESKRKRDDALTE. A compositionally biased stretch (acidic residues) spans 427–441; that stretch reads QGEEDQPPTVEESDQ. The span at 543–560 shows a compositional bias: basic and acidic residues; that stretch reads DAIERRNAGESKRKRDDA.

The protein resides in the nucleus. General stress-responsive transcription factor that governs multiple stress responses and adaptations. Plays a key role in virulence. Mediates the expression of LAC1, which is the major laccase involved in melanin synthesis. Positively regulates BZP4 induction under conditions of nutrient starvation and basal expression levels of MBS1 and USV101, 3 major transcription factors that independently contribute to melanin production. Also acts as a key regulator of ergosterol gene expression. This chain is Homeobox domain-containing transcription factor HOB1, found in Cryptococcus neoformans var. grubii serotype A (strain H99 / ATCC 208821 / CBS 10515 / FGSC 9487) (Filobasidiella neoformans var. grubii).